The following is a 315-amino-acid chain: tRNA dimethylallyltransferase (315 aa).

10–17 (GPTATGKS) provides a ligand contact to ATP. 12-17 (TATGKS) is a substrate binding site. The interaction with substrate tRNA stretch occupies residues 35-38 (DSMQ).

Belongs to the IPP transferase family. As to quaternary structure, monomer. Mg(2+) is required as a cofactor.

The catalysed reaction is adenosine(37) in tRNA + dimethylallyl diphosphate = N(6)-dimethylallyladenosine(37) in tRNA + diphosphate. Catalyzes the transfer of a dimethylallyl group onto the adenine at position 37 in tRNAs that read codons beginning with uridine, leading to the formation of N6-(dimethylallyl)adenosine (i(6)A). The protein is tRNA dimethylallyltransferase of Caldanaerobacter subterraneus subsp. tengcongensis (strain DSM 15242 / JCM 11007 / NBRC 100824 / MB4) (Thermoanaerobacter tengcongensis).